A 539-amino-acid chain; its full sequence is uncharacterized protein (539 aa).

Transmembrane regions (helical) follow at residues 4–22 (LVEN…GLLL), 27–46 (IFGF…ALST), 56–78 (LIYV…PGFF), 90–112 (ALTL…VLNI), and 155–177 (PVVA…IAIF). 2 RCK C-terminal domains span residues 187 to 269 (KEAE…AIGE) and 271 to 352 (IDGD…LLGD). 4 helical membrane-spanning segments follow: residues 360 to 382 (FNLL…EFPL), 422 to 444 (LALR…GAGF), 453 to 475 (SLTI…LFVG), and 516 to 538 (YTSV…LFLL).

It belongs to the AAE transporter (TC 2.A.81) family.

The protein resides in the cell membrane. This is an uncharacterized protein from Corynebacterium glutamicum (strain ATCC 13032 / DSM 20300 / JCM 1318 / BCRC 11384 / CCUG 27702 / LMG 3730 / NBRC 12168 / NCIMB 10025 / NRRL B-2784 / 534).